A 931-amino-acid polypeptide reads, in one-letter code: Phosphoenolpyruvate carboxylase (931 aa).

Residues His138 and Lys594 contribute to the active site.

It belongs to the PEPCase type 1 family. The cofactor is Mg(2+).

The catalysed reaction is oxaloacetate + phosphate = phosphoenolpyruvate + hydrogencarbonate. In terms of biological role, forms oxaloacetate, a four-carbon dicarboxylic acid source for the tricarboxylic acid cycle. This Streptococcus agalactiae serotype III (strain NEM316) protein is Phosphoenolpyruvate carboxylase.